The sequence spans 468 residues: Probable citrate synthase, mitochondrial (468 aa).

Residues His303, His349, and Asp404 contribute to the active site.

Belongs to the citrate synthase family. In terms of assembly, homodimer.

The protein localises to the mitochondrion matrix. The catalysed reaction is oxaloacetate + acetyl-CoA + H2O = citrate + CoA + H(+). The protein operates within carbohydrate metabolism; tricarboxylic acid cycle; isocitrate from oxaloacetate: step 1/2. The protein is Probable citrate synthase, mitochondrial (cts-1) of Caenorhabditis briggsae.